The primary structure comprises 214 residues: CRISPR-associated protein Cas5 (214 aa).

This sequence belongs to the CRISPR-associated protein Cas5 family.

CRISPR (clustered regularly interspaced short palindromic repeat) is an adaptive immune system that provides protection against mobile genetic elements (viruses, transposable elements and conjugative plasmids). CRISPR clusters contain spacers, sequences complementary to antecedent mobile elements, and target invading nucleic acids. CRISPR clusters are transcribed and processed into CRISPR RNA (crRNA). In terms of biological role, has a role in fruiting body development, sporulation and aggregation. This is CRISPR-associated protein Cas5 (devS) from Myxococcus xanthus (strain DK1622).